The sequence spans 328 residues: TNPSDPTGTCVSAVDCQGSAGYYTDDSVSDAKECKKCNAPCTACAGTADKCTKCDANGAAPYLKKTNPSDPTGTCVSAVDCQGSAGYYTDDSVSDAKECKKCNAPCTACAGTADKCTKCDANGAAPYLKKTNPSDPTGTCVSAVDCQGSAGYYTDDSVSDAKECKKCAEGQKPNTAGTQCFSCSDANCERCDQNDVCARCSTGAPPENGKCPAATPGCHSSCDGCTENAMTNQADKCTGCKEGRYLKPESAAGQSGACLTAEECTSDKTHFTREKAGDSKGMCLSCSDATHGITGCKKCALKTLSGEAESTVVCSECTDKRLTPSGNA.

Repeats lie at residues 38 to 102 and 103 to 167; these read NAPC…CKKC.

The chain is Surface antigen CRP170 from Giardia intestinalis (Giardia lamblia).